A 119-amino-acid polypeptide reads, in one-letter code: Large ribosomal subunit protein bL20 (119 aa).

It belongs to the bacterial ribosomal protein bL20 family.

Binds directly to 23S ribosomal RNA and is necessary for the in vitro assembly process of the 50S ribosomal subunit. It is not involved in the protein synthesizing functions of that subunit. The polypeptide is Large ribosomal subunit protein bL20 (Halorhodospira halophila (strain DSM 244 / SL1) (Ectothiorhodospira halophila (strain DSM 244 / SL1))).